Consider the following 336-residue polypeptide: 3-isopropylmalate dehydrogenase (336 aa).

R87, R97, R121, and D211 together coordinate substrate. The Mg(2+) site is built by D211, D235, and D239. 271–283 is a binding site for NAD(+); it reads GSAPDIAGQGIAD.

This sequence belongs to the isocitrate and isopropylmalate dehydrogenases family. LeuB type 2 subfamily. As to quaternary structure, homodimer. Mg(2+) is required as a cofactor. Requires Mn(2+) as cofactor.

The protein localises to the cytoplasm. It carries out the reaction (2R,3S)-3-isopropylmalate + NAD(+) = 4-methyl-2-oxopentanoate + CO2 + NADH. It functions in the pathway amino-acid biosynthesis; L-leucine biosynthesis; L-leucine from 3-methyl-2-oxobutanoate: step 3/4. In terms of biological role, catalyzes the oxidation of 3-carboxy-2-hydroxy-4-methylpentanoate (3-isopropylmalate) to 3-carboxy-4-methyl-2-oxopentanoate. The product decarboxylates to 4-methyl-2 oxopentanoate. In Mycobacterium leprae (strain Br4923), this protein is 3-isopropylmalate dehydrogenase.